A 463-amino-acid chain; its full sequence is uncharacterized protein (463 aa).

12 helical membrane passes run 17–37 (ISLMSLGAAIGVGLFLGSASA), 40–60 (LAGPGILVAYAASGLVMFFIM), 97–117 (WFLWVVTCMAEITAVGIYMGF), 122–142 (VPNWIWALSALVIMTGVNFLA), 153–173 (FALIKIVAILSMIAVGLLMII), 201–221 (GVLLSLQMVMFAYLGIEMIGV), 244–264 (ILIFYVGALFVIMSIYPWQEI), 278–298 (VGIPSAAGIINFVVLTAALSS), 335–355 (AVLASAGALLVGVLLNYVVPA), 357–377 (VFTWVTSIATFGAIWTWAIIL), 401–421 (LFPFTSYVSLAFLAFVVILMA), and 429–449 (AVIIGPIWFLILLAVYYGKGF).

It belongs to the amino acid-polyamine-organocation (APC) superfamily.

It is found in the cell membrane. This is an uncharacterized protein from Bacillus subtilis (strain 168).